Consider the following 455-residue polypeptide: UDP-glycosyltransferase 79B2 (455 aa).

Residues serine 266, 325–327 (VQQ), 342–350 (HCGFGSMWE), and 364–367 (LGDQ) contribute to the UDP-alpha-D-glucose site.

The protein belongs to the UDP-glycosyltransferase family.

The chain is UDP-glycosyltransferase 79B2 (UGT79B2) from Arabidopsis thaliana (Mouse-ear cress).